Reading from the N-terminus, the 170-residue chain is FMRFamide-like neuropeptides 6 (170 aa).

A signal peptide spans 1 to 19; sequence MNSRGLILTLGVVIAVAFA. Position 20 is a pyrrolidone carboxylic acid (Gln-20). At Phe-39 the chain carries Phenylalanine amide. Positions 42–51 are excised as a propeptide; sequence SDGGNPMEME. Phe-60 bears the Phenylalanine amide mark. The propeptide occupies 63–81; that stretch reads RSSGGDEQELVGGDDIDME. Phe-90 is subject to Phenylalanine amide. The propeptide occupies 93 to 104; the sequence is RSGPQEDDMPME. Phe-113 bears the Phenylalanine amide mark. Positions 116–136 are excised as a propeptide; sequence RSSDMEVIGNEGVDGDAHDLF. A Phenylalanine amide modification is found at Phe-145. Residues 148–159 constitute a propeptide that is removed on maturation; sequence RSMGEEEDHDMM. Residues 150 to 170 form a disordered region; it reads MGEEEDHDMMKRKSAYMRFGR. Basic residues predominate over residues 159 to 170; sequence MKRKSAYMRFGR. A Phenylalanine amide modification is found at Phe-168.

This sequence belongs to the FARP (FMRFamide related peptide) family. In terms of tissue distribution, each flp gene is expressed in a distinct set of neurons. Flp-6 is expressed in the ASE sensory neurons, AFD, ASG, PVT and I1 neurons.

Its subcellular location is the secreted. In terms of biological role, FMRFamides and FMRFamide-like peptides are neuropeptides. KSAYMRF-amide has an excitatory effect on dissected pharyngeal myogenic muscle system. The polypeptide is FMRFamide-like neuropeptides 6 (Caenorhabditis elegans).